The chain runs to 141 residues: Large ribosomal subunit protein uL11 (141 aa).

This sequence belongs to the universal ribosomal protein uL11 family. As to quaternary structure, part of the ribosomal stalk of the 50S ribosomal subunit. Interacts with L10 and the large rRNA to form the base of the stalk. L10 forms an elongated spine to which L12 dimers bind in a sequential fashion forming a multimeric L10(L12)X complex. One or more lysine residues are methylated.

Forms part of the ribosomal stalk which helps the ribosome interact with GTP-bound translation factors. The polypeptide is Large ribosomal subunit protein uL11 (Streptococcus agalactiae serotype Ia (strain ATCC 27591 / A909 / CDC SS700)).